A 135-amino-acid polypeptide reads, in one-letter code: uncharacterized protein (135 aa).

Residues 1–80 are disordered; the sequence is MRSSSLPGAR…QRGSCASANA (80 aa). The segment covering 54 to 65 has biased composition (gly residues); sequence GARGGGRRGWGG.

This is an uncharacterized protein from Homo sapiens (Human).